The chain runs to 332 residues: Methionine synthase (332 aa).

Residues histidine 211, cysteine 213, and cysteine 296 each contribute to the Zn(2+) site.

Belongs to the archaeal MetE family. Zn(2+) serves as cofactor.

It participates in amino-acid biosynthesis; L-methionine biosynthesis via de novo pathway. Catalyzes the transfer of a methyl group to L-homocysteine resulting in methionine formation. The physiological methyl donor is unknown. This chain is Methionine synthase, found in Saccharolobus solfataricus (strain ATCC 35092 / DSM 1617 / JCM 11322 / P2) (Sulfolobus solfataricus).